A 276-amino-acid polypeptide reads, in one-letter code: Ribosomal RNA small subunit methyltransferase A (276 aa).

6 residues coordinate S-adenosyl-L-methionine: asparagine 27, leucine 29, glycine 54, glutamate 75, aspartate 101, and asparagine 123.

Belongs to the class I-like SAM-binding methyltransferase superfamily. rRNA adenine N(6)-methyltransferase family. RsmA subfamily.

The protein localises to the cytoplasm. The catalysed reaction is adenosine(1518)/adenosine(1519) in 16S rRNA + 4 S-adenosyl-L-methionine = N(6)-dimethyladenosine(1518)/N(6)-dimethyladenosine(1519) in 16S rRNA + 4 S-adenosyl-L-homocysteine + 4 H(+). Specifically dimethylates two adjacent adenosines (A1518 and A1519) in the loop of a conserved hairpin near the 3'-end of 16S rRNA in the 30S particle. May play a critical role in biogenesis of 30S subunits. This chain is Ribosomal RNA small subunit methyltransferase A, found in Bartonella tribocorum (strain CIP 105476 / IBS 506).